The primary structure comprises 372 residues: Mevalonate 3,5-bisphosphate decarboxylase (372 aa).

It belongs to the mevalonate 3,5-bisphosphate decarboxylase family. As to quaternary structure, homodimer.

It catalyses the reaction (R)-3,5-bisphosphomevalonate + H(+) = isopentenyl phosphate + phosphate + CO2. The protein operates within isoprenoid biosynthesis; isopentenyl diphosphate biosynthesis via mevalonate pathway. Functionally, catalyzes the ATP-independent decarboxylation of (R)-mevalonate 3,5-bisphosphate to isopentenyl phosphate. Functions in an alternative mevalonate pathway, only present in extreme acidophiles of the Thermoplasmatales order, which passes through mevalonate 3-phosphate rather than mevalonate 5-phosphate. The polypeptide is Mevalonate 3,5-bisphosphate decarboxylase (Thermoplasma volcanium (strain ATCC 51530 / DSM 4299 / JCM 9571 / NBRC 15438 / GSS1)).